The chain runs to 565 residues: Zinc finger protein 143 (565 aa).

7 consecutive C2H2-type zinc fingers follow at residues 230-254 (FRCD…ERSH), 260-284 (YQCD…VRTH), 290-314 (YRCS…VRTH), 320-344 (FKCP…IRTH), 350-374 (YYCS…VRIH), 380-404 (YVCT…HVVH), and 410-433 (YNCN…RTAH).

The protein belongs to the GLI C2H2-type zinc-finger protein family.

It localises to the nucleus. Functionally, transcriptional activator. Activates the gene for selenocysteine tRNA (tRNAsec). Binds to the activator element (AE) motif of the selenocysteine tRNA gene promoter. The chain is Zinc finger protein 143 (znf143) from Xenopus laevis (African clawed frog).